The following is a 244-amino-acid chain: NAD(P)H-quinone oxidoreductase subunit K (244 aa).

The [4Fe-4S] cluster site is built by cysteine 60, cysteine 61, cysteine 125, and cysteine 156. A disordered region spans residues 213–244 (TSANSIPSSKKEKITELPDNNEKAEIIDTLEN). Residues 221–238 (SKKEKITELPDNNEKAEI) are compositionally biased toward basic and acidic residues.

This sequence belongs to the complex I 20 kDa subunit family. NDH-1 can be composed of about 15 different subunits; different subcomplexes with different compositions have been identified which probably have different functions. [4Fe-4S] cluster is required as a cofactor.

It localises to the cellular thylakoid membrane. The enzyme catalyses a plastoquinone + NADH + (n+1) H(+)(in) = a plastoquinol + NAD(+) + n H(+)(out). The catalysed reaction is a plastoquinone + NADPH + (n+1) H(+)(in) = a plastoquinol + NADP(+) + n H(+)(out). Functionally, NDH-1 shuttles electrons from an unknown electron donor, via FMN and iron-sulfur (Fe-S) centers, to quinones in the respiratory and/or the photosynthetic chain. The immediate electron acceptor for the enzyme in this species is believed to be plastoquinone. Couples the redox reaction to proton translocation, and thus conserves the redox energy in a proton gradient. Cyanobacterial NDH-1 also plays a role in inorganic carbon-concentration. The sequence is that of NAD(P)H-quinone oxidoreductase subunit K from Prochlorococcus marinus (strain MIT 9301).